The chain runs to 503 residues: MSTKLVDHVEITVPTGKTYIQPVGLFINNQHVDSVHGGRVKVYSPSTEKLICEVADADEEDVDIAVKVARAAFQTDAPWRKFSSAQRGRCLSRLADCIEQNLEYLASIETLDNGKSITLARGDVQAAADCFRYYGGWADKDYGQTIETDIKRFAYTRHEPIGVCGQIIPWNFPFLMCAWKIAPAVACGNTIILKTAELTPLSALCLTKFVPECGFPPGVINVLSGDGRRCGNAISSHMDIDKVAFTGSTGVGRMVMRAAASSNLKKVTLELGGKSPNIVFNDADLDSAAVWTNYGIFYNSGQVCCAGSRVYVQEDVYDEFIKRMVAKAKTLKVGDPFAEDTFQGAQVSKQQYERIVSYIESGIAHGAKLEIGGKRHGNLGYFVEPTILSNVTEDMAVGKEEIFGPVLAVIKFKTIEEAIRRGNNSTYGLAAGVHTNNITNAIKVSNALEAGTVWVNCYNLLHHQIPFGGYKESGIGRELGSYGLTNYTQTKAVHINLGMDSPI.

Gly-247–Gly-252 provides a ligand contact to NAD(+). Position 248 is a phosphoserine (Ser-248). The active-site Proton acceptor is Glu-270. The active-site Nucleophile is the Cys-304. Residue Ser-501 is modified to Phosphoserine.

It belongs to the aldehyde dehydrogenase family.

The sequence is that of Putative aldehyde dehydrogenase-like protein C9E9.09c from Schizosaccharomyces pombe (strain 972 / ATCC 24843) (Fission yeast).